A 316-amino-acid chain; its full sequence is Methionyl-tRNA formyltransferase (316 aa).

(6S)-5,6,7,8-tetrahydrofolate is bound at residue 108–111; that stretch reads SLLP.

This sequence belongs to the Fmt family.

The enzyme catalyses L-methionyl-tRNA(fMet) + (6R)-10-formyltetrahydrofolate = N-formyl-L-methionyl-tRNA(fMet) + (6S)-5,6,7,8-tetrahydrofolate + H(+). Its function is as follows. Attaches a formyl group to the free amino group of methionyl-tRNA(fMet). The formyl group appears to play a dual role in the initiator identity of N-formylmethionyl-tRNA by promoting its recognition by IF2 and preventing the misappropriation of this tRNA by the elongation apparatus. This chain is Methionyl-tRNA formyltransferase, found in Heliobacterium modesticaldum (strain ATCC 51547 / Ice1).